The sequence spans 477 residues: Delayed-rectifier potassium channel regulatory subunit KCNS2 (477 aa).

At 1–184 (MTRQSLWDLS…LALDNPGYSV (184 aa)) the chain is on the cytoplasmic side. The helical transmembrane segment at 185 to 206 (LSRVFSVLSILVVLGSIITMCL) threads the bilayer. Residues 207-225 (NSLPDFQIPDSQGNPGEDP) lie on the Extracellular side of the membrane. A helical transmembrane segment spans residues 226–248 (RFEIVEHFGIAWFTFELVARFAV). Over 249-259 (APDFLKFFKNA) the chain is Cytoplasmic. A helical membrane pass occupies residues 260–280 (LNLIDLMSIVPFYITLVVNLV). Residues 281–290 (VESSPTLANL) are Extracellular-facing. The chain crosses the membrane as a helical; Voltage-sensor span at residues 291–311 (GRVAQVLRLMRIFRILKLARH). The Cytoplasmic portion of the chain corresponds to 312 to 326 (STGLRSLGATLKYSY). A helical membrane pass occupies residues 327 to 348 (KEVGLLLLYLSVGISIFSVVAY). At 349–361 (TIEKEENEGLATI) the chain is on the extracellular side. An intramembrane region (helical) is located at residues 362–373 (PACWWWATVSMT). The Selectivity filter signature appears at 374-379 (TVGYGD). An intramembrane segment occupies 374 to 381 (TVGYGDVV). The Extracellular segment spans residues 382–388 (PGTTAGK). A helical transmembrane segment spans residues 389-417 (LTASACILAGILVVVLPITLIFNKFSHFY). The Cytoplasmic portion of the chain corresponds to 418-477 (RRQKQLESAMRSCDFGDGMKEVPSVNLRDYYAHKVKSLMASLTNMSRSSPSELSLDDSLH).

Belongs to the potassium channel family. S (TC 1.A.1.2) subfamily. Kv9.2/KCNS2 sub-subfamily. As to quaternary structure, heterotetramer with KCNB1 and KCNB2. Does not form homomultimers. As to expression, detected in brain, lung and in pulmonary arteries.

It is found in the cell membrane. Its function is as follows. Potassium channel regulatory subunit that modulate the delayed rectifier voltage-gated potassium channel activity of KCNB1 and KCNB2 by altering their kinetics, expression levels, and shifting the half-inactivation potential to more polarized values. While it does not form functional channels on its own, it can form functional heterotetrameric channels with KCNB1 and KCNB2. Each regulatory subunit has unique regulatory properties that can lead to extensive inhibition, significant changes in kinetics, and/or substantial shifts in the voltage dependencies of the inactivation process. This chain is Delayed-rectifier potassium channel regulatory subunit KCNS2, found in Rattus norvegicus (Rat).